Consider the following 804-residue polypeptide: Zinc finger protein 541 (804 aa).

2 disordered regions span residues 21–120 (SKAS…NPDI) and 133–197 (TLDL…GNPR). A C2H2-type 1 zinc finger spans residues 285-307 (FICKNCSQMFYTEKGLSSHMCFH). Residues 379–426 (MEQEKDGEERDSKESSQQRKRKKRPPPKRLFIPPPPSTAGEPGPAGCH) are disordered. Residues 380–395 (EQEKDGEERDSKESSQ) show a composition bias toward basic and acidic residues. A compositionally biased stretch (basic residues) spans 396 to 405 (QRKRKKRPPP). Residues 509–601 (PHINIGSRFQ…VALETLLLRG (93 aa)) form the ELM2 domain. One can recognise an SANT domain in the interval 616–667 (TGSDVWTPIEKRLFKKAFYAHKKDFYLIHKTIQTKTVAQCVEYYYIWKKMIK). Positions 680 to 743 (VKREPEEVER…TPEPSGSVES (64 aa)) are disordered. The span at 690-721 (TEEKVPCSPRERPSHHPIPELKIKTKSYRRES) shows a compositional bias: basic and acidic residues. The segment at 747 to 769 (FPCRECERVFDKIKSRNAHMKRH) adopts a C2H2-type 2 zinc-finger fold.

As to quaternary structure, interacts with DNTTIP1. Identified in a complex with KCDT19, HDAC1 and HSPA2s. Component of a histone deacetylase complex containing DNTTIP1, ZNF541, HDAC1 and HDAC2. Identified in a complex with HDAC1, HDAC2, DNTTIP1 and KCTD19.

Its subcellular location is the nucleus. Functionally, transcription regulator which is essential for male fertility and for the completion of meiotic prophase in spermatocytes. Regulates progression of the pachytene stage of meiotic prophase by activating the expression of genes involved in meiosis and post-meiosis during spermatogenesis. Maintains the repression of pre-pachytene transcriptional programs, including meiotic double-strand breaks (DSB) formation genes in pachytene spermatocytes and suppresses aberrant DSB formation after mid-pachytene, thus ensuring meiosis progression. The polypeptide is Zinc finger protein 541 (ZNF541) (Macaca fascicularis (Crab-eating macaque)).